Reading from the N-terminus, the 452-residue chain is GTPase Der (452 aa).

EngA-type G domains follow at residues 4–169 and 177–352; these read PIVA…PTTE and IKVA…ASHR. GTP contacts are provided by residues 10–17, 57–61, 120–123, 183–190, 230–234, and 295–298; these read GRPNVGKS, DTGGL, NKCE, DTAGI, and NKWD. The region spanning 353 to 438 is the KH-like domain; sequence RRVSTAVINE…PIRLIWRGKS (86 aa).

The protein belongs to the TRAFAC class TrmE-Era-EngA-EngB-Septin-like GTPase superfamily. EngA (Der) GTPase family. As to quaternary structure, associates with the 50S ribosomal subunit.

Its function is as follows. GTPase that plays an essential role in the late steps of ribosome biogenesis. This chain is GTPase Der, found in Gloeothece citriformis (strain PCC 7424) (Cyanothece sp. (strain PCC 7424)).